Consider the following 474-residue polypeptide: tRNA-2-methylthio-N(6)-dimethylallyladenosine synthase (474 aa).

The region spanning 3-120 is the MTTase N-terminal domain; that stretch reads KKLLIKTWGC…LPQMIKDSQS (118 aa). [4Fe-4S] cluster-binding residues include cysteine 12, cysteine 49, cysteine 83, cysteine 157, cysteine 161, and cysteine 164. The Radical SAM core domain occupies 143–375; the sequence is RADGVTAFVS…QQQINTQAMR (233 aa). The 64-residue stretch at 378-441 folds into the TRAM domain; it reads RQMLNTEQRI…TNSLRGELVR (64 aa).

Belongs to the methylthiotransferase family. MiaB subfamily. Monomer. Requires [4Fe-4S] cluster as cofactor.

The protein localises to the cytoplasm. The catalysed reaction is N(6)-dimethylallyladenosine(37) in tRNA + (sulfur carrier)-SH + AH2 + 2 S-adenosyl-L-methionine = 2-methylsulfanyl-N(6)-dimethylallyladenosine(37) in tRNA + (sulfur carrier)-H + 5'-deoxyadenosine + L-methionine + A + S-adenosyl-L-homocysteine + 2 H(+). Catalyzes the methylthiolation of N6-(dimethylallyl)adenosine (i(6)A), leading to the formation of 2-methylthio-N6-(dimethylallyl)adenosine (ms(2)i(6)A) at position 37 in tRNAs that read codons beginning with uridine. The chain is tRNA-2-methylthio-N(6)-dimethylallyladenosine synthase from Photobacterium profundum (strain SS9).